The sequence spans 206 residues: Cytochrome c oxidase subunit 3 (206 aa).

5 consecutive transmembrane segments (helical) span residues Phe26–Thr46, Leu68–Phe88, Ala97–Ile117, Leu143–Ile163, and Trp185–Gly205.

Belongs to the cytochrome c oxidase subunit 3 family.

The protein resides in the cell membrane. The catalysed reaction is 4 Fe(II)-[cytochrome c] + O2 + 8 H(+)(in) = 4 Fe(III)-[cytochrome c] + 2 H2O + 4 H(+)(out). The polypeptide is Cytochrome c oxidase subunit 3 (ctaE) (Alkalihalophilus pseudofirmus (strain ATCC BAA-2126 / JCM 17055 / OF4) (Bacillus pseudofirmus)).